The primary structure comprises 146 residues: Large ribosomal subunit protein uL15 (146 aa).

Residues 1 to 13 show a composition bias toward basic and acidic residues; the sequence is MKLHELRPAEGSR. Positions 1 to 55 are disordered; the sequence is MKLHELRPAEGSRKSPKRVGRGTGSGLGKTSARGENGQNSRSGGGVRPGFEGGQM. The span at 42-52 shows a compositional bias: gly residues; sequence SGGGVRPGFEG.

It belongs to the universal ribosomal protein uL15 family. Part of the 50S ribosomal subunit.

Its function is as follows. Binds to the 23S rRNA. The chain is Large ribosomal subunit protein uL15 from Clostridium tetani (strain Massachusetts / E88).